The following is a 174-amino-acid chain: DKPHVNVGTIGHVDHGKILAEGGGAKKYEEIDNAPEERARGITINAAHVEYSTAARHYAHTDCPGHADYVKDPELGVKSVQKLLDAVDTYIPVPTRGTVVTGTLERGDECELLGHNKNIRSLERAEAGDNLGALVRGLVMVKPGSIQPHQKVEAQVYILSKEEGGRFTLRDGNK.

62–66 (DCPGH) serves as a coordination point for GTP. At lysine 78 the chain carries N6-succinyllysine. Phosphothreonine is present on threonine 103. Residue serine 121 is modified to Phosphoserine. Residue lysine 161 is modified to N6-acetyllysine.

Belongs to the GTP-binding elongation factor family. EF-Tu/EF-1A subfamily.

Its subcellular location is the mitochondrion. The catalysed reaction is GTP + H2O = GDP + phosphate + H(+). GTP hydrolase that promotes the GTP-dependent binding of aminoacyl-tRNA to the A-site of ribosomes during protein biosynthesis. This is Elongation factor Tu, mitochondrial from Mesocricetus auratus (Golden hamster).